Here is a 364-residue protein sequence, read N- to C-terminus: Geissoschizine synthase (364 aa).

Residues G24–I343 form the Enoyl reductase (ER) domain. Position 51 (C51) interacts with Zn(2+). N52 contributes to the NADP(+) binding site. Zn(2+)-binding residues include H73, E74, C104, C107, C110, C118, and C168. NADP(+)-binding residues include L194, G196, L197, S216, T217, S218, K221, R261, V280, A282, S304, T306, and R351.

Belongs to the zinc-containing alcohol dehydrogenase family. Class-III subfamily. In terms of assembly, homodimer. The cofactor is Zn(2+).

The catalysed reaction is (19E)-geissoschizine + NADP(+) = 4,21-dehydrogeissoschizine + NADPH. It catalyses the reaction (19E)-geissoschizine + NADPH + H(+) = (16R,19E)-isositsirikine + NADP(+). It carries out the reaction (19E)-geissoschizine + NADPH + H(+) = (16R,19Z)-isositsirikine + NADP(+). Its pathway is alkaloid biosynthesis. In terms of biological role, an alcohol dehydrogenase involved in the biosynthesis of seco-iridoid and derivatives monoterpenoid indole alkaloids natural products. Catalyzes the production of geissoschizine and its conversion to (16R)-E-isositsirikine and (16R)-Z-isositsirikine. The polypeptide is Geissoschizine synthase (Alstonia scholaris (Dogbane)).